The sequence spans 255 residues: Triosephosphate isomerase (255 aa).

10 to 12 (NWK) is a binding site for substrate. Catalysis depends on His-96, which acts as the Electrophile. The active-site Proton acceptor is the Glu-168. Substrate-binding positions include Gly-174, Ser-213, and 234–235 (GG).

This sequence belongs to the triosephosphate isomerase family. In terms of assembly, homodimer.

The protein localises to the cytoplasm. The catalysed reaction is D-glyceraldehyde 3-phosphate = dihydroxyacetone phosphate. It participates in carbohydrate biosynthesis; gluconeogenesis. It functions in the pathway carbohydrate degradation; glycolysis; D-glyceraldehyde 3-phosphate from glycerone phosphate: step 1/1. In terms of biological role, involved in the gluconeogenesis. Catalyzes stereospecifically the conversion of dihydroxyacetone phosphate (DHAP) to D-glyceraldehyde-3-phosphate (G3P). This chain is Triosephosphate isomerase, found in Histophilus somni (strain 129Pt) (Haemophilus somnus).